Consider the following 527-residue polypeptide: MADSRDPASDQMKHWKEERAAQKPDVLTTAGGNPVGDKLNIMTVGPRGPLLVQDVVFTDEMAHFDRERIPERVVHAKGAGAFAYFEVTHDITKYCKAKVFEHIGKKTPIAVRFSTVAGESGSADTVRDPRGFAVKFYTEEGIWDLVGNNTPIFFIRDALLFPSFIHSQKRNPQTHLKDPDMMWDFWSLRPESLHQVSFLFSDRGIPDGHRHMNGYGSHTFKLVNGSGEAVYCKFHYKTDQGIKNLSVEDAARLSQEDPDYGLRDLFNAIATGNYPSWTLYIQVMTFQQAQSFPFNPFDLTKIWPHKDYPLIPVGKLVLNRNPVNYFAEVEQIAFDPSNMPPGIEPSPDKMLQGRLFAYPDTHRHRLGPNYLQIPVNCPYRTRVANYQRDGPMCVTDNQGGAPNYYPNSFSAPVEQRQALEHTSRCSGDVGRYNSTDDDNVTQVRAFYTQVLNEEQRRRLCENIAGHLKDAQLFIQKKAVKNFMDVHPDYGNRIQTLLDKYNVEKPKNAIHTFVQDGSHLSAKEKANL.

Basic and acidic residues predominate over residues 1-22 (MADSRDPASDQMKHWKEERAAQ). The disordered stretch occupies residues 1–32 (MADSRDPASDQMKHWKEERAAQKPDVLTTAGG). An N-acetylalanine modification is found at alanine 2. Serine 9 carries the phosphoserine modification. Lysine 13 bears the N6-succinyllysine mark. Active-site residues include histidine 75 and asparagine 148. NADP(+)-binding residues include histidine 194, serine 201, arginine 203, and asparagine 213. Lysine 221 is modified (N6-succinyllysine). Lysine 233 is subject to N6-acetyllysine. Residues lysine 237, tryptophan 303, histidine 305, and lysine 306 each coordinate NADP(+). At lysine 306 the chain carries N6-acetyllysine; alternate. Lysine 306 is subject to N6-succinyllysine; alternate. Residue tyrosine 358 coordinates heme. Serine 434 carries the phosphoserine modification. At lysine 480 the chain carries N6-acetyllysine; alternate. Lysine 480 is modified (N6-succinyllysine; alternate). Residue lysine 499 is modified to N6-acetyllysine. At threonine 511 the chain carries Phosphothreonine. Serine 517 is modified (phosphoserine). Lysine 522 carries the post-translational modification N6-succinyllysine. Residues 524–527 (KANL) carry the Microbody targeting signal; atypical motif.

Belongs to the catalase family. As to quaternary structure, homotetramer. Interacts (via microbody targeting signal) with PEX5, monomeric form interacts with PEX5, leading to its translocation into peroxisomes. Heme serves as cofactor. It depends on NADP(+) as a cofactor.

It is found in the peroxisome matrix. It catalyses the reaction 2 H2O2 = O2 + 2 H2O. In terms of biological role, catalyzes the degradation of hydrogen peroxide (H(2)O(2)) generated by peroxisomal oxidases to water and oxygen, thereby protecting cells from the toxic effects of hydrogen peroxide. Promotes growth of cells including T-cells, B-cells, myeloid leukemia cells, melanoma cells, mastocytoma cells and normal and transformed fibroblast cells. This chain is Catalase (CAT), found in Cavia porcellus (Guinea pig).